The sequence spans 340 residues: Phosphoribosylformylglycinamidine cyclo-ligase (340 aa).

It belongs to the AIR synthase family.

It is found in the cytoplasm. The catalysed reaction is 2-formamido-N(1)-(5-O-phospho-beta-D-ribosyl)acetamidine + ATP = 5-amino-1-(5-phospho-beta-D-ribosyl)imidazole + ADP + phosphate + H(+). The protein operates within purine metabolism; IMP biosynthesis via de novo pathway; 5-amino-1-(5-phospho-D-ribosyl)imidazole from N(2)-formyl-N(1)-(5-phospho-D-ribosyl)glycinamide: step 2/2. The polypeptide is Phosphoribosylformylglycinamidine cyclo-ligase (Streptococcus pyogenes serotype M2 (strain MGAS10270)).